A 95-amino-acid polypeptide reads, in one-letter code: MSVDAATVRKIAQLARIAVTDAEVPHLQGELNAMLAFVEQLSEVNVEGVEPMTSVTPMAMKKRQDVVTEGDIADDIVKNAPMTENNFFLVPKVVE.

The protein belongs to the GatC family. As to quaternary structure, heterotrimer of A, B and C subunits.

It carries out the reaction L-glutamyl-tRNA(Gln) + L-glutamine + ATP + H2O = L-glutaminyl-tRNA(Gln) + L-glutamate + ADP + phosphate + H(+). The catalysed reaction is L-aspartyl-tRNA(Asn) + L-glutamine + ATP + H2O = L-asparaginyl-tRNA(Asn) + L-glutamate + ADP + phosphate + 2 H(+). Functionally, allows the formation of correctly charged Asn-tRNA(Asn) or Gln-tRNA(Gln) through the transamidation of misacylated Asp-tRNA(Asn) or Glu-tRNA(Gln) in organisms which lack either or both of asparaginyl-tRNA or glutaminyl-tRNA synthetases. The reaction takes place in the presence of glutamine and ATP through an activated phospho-Asp-tRNA(Asn) or phospho-Glu-tRNA(Gln). The chain is Aspartyl/glutamyl-tRNA(Asn/Gln) amidotransferase subunit C from Bradyrhizobium sp. (strain ORS 278).